Reading from the N-terminus, the 562-residue chain is IRK-interacting protein (562 aa).

Disordered regions lie at residues 29-61 and 303-322; these read ASLM…RPLP and VVSQ…SEMP. Residues 36–61 show a composition bias toward low complexity; it reads SSPSSNYSLRNPSSSSAASPASRPLP. Residues 246 to 306 adopt a coiled-coil conformation; it reads SGVEKLKREL…LREATEVVSQ (61 aa).

In terms of assembly, interacts with IRK. As to expression, highly expressed in root tips, shoot apices and developing flowers.

The chain is IRK-interacting protein from Arabidopsis thaliana (Mouse-ear cress).